An 803-amino-acid chain; its full sequence is Protein AMEIOTIC 1 homolog (803 aa).

Disordered stretches follow at residues 21-64 (RPQV…QSLS) and 264-333 (RLRQ…RWSA). Positions 39–50 (NGKDDANHDESK) are enriched in basic and acidic residues. Over residues 51–64 (NQSPGLPLSRQSLS) the composition is skewed to polar residues. A compositionally biased stretch (basic and acidic residues) spans 283–295 (KREEAESSMDKSR). Positions 296–313 (AARKKKAKTYKSPKKVEK) are enriched in basic residues. Residues 314 to 333 (RRVVEAKDGDPRRGKDRWSA) show a composition bias toward basic and acidic residues. Residues 450 to 567 (VKKKVEELAE…SSFLSLKEQL (118 aa)) adopt a coiled-coil conformation. The segment at 651–688 (ISGGGSSSCPVASGPEQLPRSSSCPSIGPGGLPPSSRA) is disordered.

It is found in the nucleus. The protein resides in the chromosome. Its function is as follows. Plays a fundamental role in building the proper chromosome structure at the beginning of meiosis in male meiocytes. Required for the transition from leptotene to zygotene in meiocytes. Required for homologous chromosome pairing. The sequence is that of Protein AMEIOTIC 1 homolog from Oryza sativa subsp. japonica (Rice).